The primary structure comprises 386 residues: Succinate--CoA ligase [ADP-forming] subunit beta (386 aa).

The region spanning 9 to 244 (KEILRNFGVP…LDEEDPAEVE (236 aa)) is the ATP-grasp domain. ATP contacts are provided by residues K46, 53–55 (GRG), E99, A102, and E107. Positions 199 and 213 each coordinate Mg(2+). Substrate contacts are provided by residues N264 and 321-323 (GIM).

This sequence belongs to the succinate/malate CoA ligase beta subunit family. Heterotetramer of two alpha and two beta subunits. Requires Mg(2+) as cofactor.

The catalysed reaction is succinate + ATP + CoA = succinyl-CoA + ADP + phosphate. The enzyme catalyses GTP + succinate + CoA = succinyl-CoA + GDP + phosphate. It functions in the pathway carbohydrate metabolism; tricarboxylic acid cycle; succinate from succinyl-CoA (ligase route): step 1/1. Its function is as follows. Succinyl-CoA synthetase functions in the citric acid cycle (TCA), coupling the hydrolysis of succinyl-CoA to the synthesis of either ATP or GTP and thus represents the only step of substrate-level phosphorylation in the TCA. The beta subunit provides nucleotide specificity of the enzyme and binds the substrate succinate, while the binding sites for coenzyme A and phosphate are found in the alpha subunit. The protein is Succinate--CoA ligase [ADP-forming] subunit beta of Polaromonas naphthalenivorans (strain CJ2).